A 258-amino-acid polypeptide reads, in one-letter code: Global transcriptional regulator CodY (258 aa).

The segment at Met1–Leu156 is GAF domain. The segment at residues Ala204 to Arg223 is a DNA-binding region (H-T-H motif).

It belongs to the CodY family.

It localises to the cytoplasm. DNA-binding global transcriptional regulator which is involved in the adaptive response to starvation and acts by directly or indirectly controlling the expression of numerous genes in response to nutrient availability. During rapid exponential growth, CodY is highly active and represses genes whose products allow adaptation to nutrient depletion. This chain is Global transcriptional regulator CodY, found in Clostridium acetobutylicum (strain ATCC 824 / DSM 792 / JCM 1419 / IAM 19013 / LMG 5710 / NBRC 13948 / NRRL B-527 / VKM B-1787 / 2291 / W).